A 421-amino-acid chain; its full sequence is Tryptophan synthase beta chain (421 aa).

Lysine 110 carries the post-translational modification N6-(pyridoxal phosphate)lysine.

Belongs to the TrpB family. As to quaternary structure, tetramer of two alpha and two beta chains. Pyridoxal 5'-phosphate is required as a cofactor.

The catalysed reaction is (1S,2R)-1-C-(indol-3-yl)glycerol 3-phosphate + L-serine = D-glyceraldehyde 3-phosphate + L-tryptophan + H2O. It participates in amino-acid biosynthesis; L-tryptophan biosynthesis; L-tryptophan from chorismate: step 5/5. The beta subunit is responsible for the synthesis of L-tryptophan from indole and L-serine. The chain is Tryptophan synthase beta chain (trpB) from Mycobacterium intracellulare.